A 110-amino-acid chain; its full sequence is Guanine nucleotide-binding protein subunit gamma (110 aa).

Cys106 carries the S-palmitoyl cysteine lipid modification. Position 107 is a cysteine methyl ester (Cys107). Residue Cys107 is the site of S-farnesyl cysteine attachment. Residues 108 to 110 (TLM) constitute a propeptide, removed in mature form.

It belongs to the G protein gamma family. G proteins are composed of 3 units, alpha, beta and gamma. The beta-gamma subunit complex (STE4-STE18 complex) interacts with PLP1 and PLP2.

Its subcellular location is the membrane. Implicated in the pheromone A- and alpha-factor response pathway. The beta and gamma chains of the putative yeast mating response pathway G protein play a positive role in initiation of the mating response. The protein is Guanine nucleotide-binding protein subunit gamma (STE18) of Saccharomyces cerevisiae (strain ATCC 204508 / S288c) (Baker's yeast).